The sequence spans 340 residues: Glyceraldehyde-3-phosphate dehydrogenase, cytosolic (340 aa).

NAD(+) is bound by residues 16–17, Asp38, and Arg85; that span reads RI. D-glyceraldehyde 3-phosphate contacts are provided by residues 156-158, Thr187, 216-217, and Arg239; these read SCT and TG. Cys157 serves as the catalytic Nucleophile. Asn321 contributes to the NAD(+) binding site.

It belongs to the glyceraldehyde-3-phosphate dehydrogenase family. Homotetramer.

The protein resides in the cytoplasm. It carries out the reaction D-glyceraldehyde 3-phosphate + phosphate + NAD(+) = (2R)-3-phospho-glyceroyl phosphate + NADH + H(+). Its pathway is carbohydrate degradation; glycolysis; pyruvate from D-glyceraldehyde 3-phosphate: step 1/5. In terms of biological role, key enzyme in glycolysis that catalyzes the first step of the pathway by converting D-glyceraldehyde 3-phosphate (G3P) into 3-phospho-D-glyceroyl phosphate. Essential for the maintenance of cellular ATP levels and carbohydrate metabolism. The protein is Glyceraldehyde-3-phosphate dehydrogenase, cytosolic of Ginkgo biloba (Ginkgo).